The chain runs to 77 residues: Probable Fe(2+)-trafficking protein (77 aa).

This sequence belongs to the Fe(2+)-trafficking protein family.

Functionally, could be a mediator in iron transactions between iron acquisition and iron-requiring processes, such as synthesis and/or repair of Fe-S clusters in biosynthetic enzymes. The polypeptide is Probable Fe(2+)-trafficking protein (Baumannia cicadellinicola subsp. Homalodisca coagulata).